We begin with the raw amino-acid sequence, 295 residues long: Cytidine deaminase (295 aa).

2 CMP/dCMP-type deaminase domains span residues 48-168 and 187-295; these read TDSE…FGPA and KETD…YVAA. A substrate-binding site is contributed by 89-91; sequence NME. Residue histidine 102 participates in Zn(2+) binding. The active-site Proton donor is the glutamate 104. Residues cysteine 129 and cysteine 132 each contribute to the Zn(2+) site.

It belongs to the cytidine and deoxycytidylate deaminase family. As to quaternary structure, homodimer. Requires Zn(2+) as cofactor.

The catalysed reaction is cytidine + H2O + H(+) = uridine + NH4(+). It catalyses the reaction 2'-deoxycytidine + H2O + H(+) = 2'-deoxyuridine + NH4(+). This enzyme scavenges exogenous and endogenous cytidine and 2'-deoxycytidine for UMP synthesis. This is Cytidine deaminase from Photobacterium profundum (strain SS9).